Here is a 225-residue protein sequence, read N- to C-terminus: Cytochrome c oxidase subunit 2 (225 aa).

Topologically, residues Met-1–Asn-25 are mitochondrial intermembrane. A helical membrane pass occupies residues Met-26–Leu-47. The Mitochondrial matrix portion of the chain corresponds to Asn-48–Glu-62. A helical transmembrane segment spans residues Ile-63–Lys-82. Topologically, residues Ile-83 to Asn-225 are mitochondrial intermembrane. Cu cation is bound by residues His-159, Cys-194, Glu-196, Cys-198, His-202, and Met-205. Glu-196 serves as a coordination point for Mg(2+).

Belongs to the cytochrome c oxidase subunit 2 family. Component of the cytochrome c oxidase (complex IV, CIV), a multisubunit enzyme composed of a catalytic core of 3 subunits and several supernumerary subunits. The complex exists as a monomer or a dimer and forms supercomplexes (SCs) in the inner mitochondrial membrane with ubiquinol-cytochrome c oxidoreductase (cytochrome b-c1 complex, complex III, CIII). Requires Cu cation as cofactor.

It localises to the mitochondrion inner membrane. It catalyses the reaction 4 Fe(II)-[cytochrome c] + O2 + 8 H(+)(in) = 4 Fe(III)-[cytochrome c] + 2 H2O + 4 H(+)(out). In terms of biological role, component of the cytochrome c oxidase, the last enzyme in the mitochondrial electron transport chain which drives oxidative phosphorylation. The respiratory chain contains 3 multisubunit complexes succinate dehydrogenase (complex II, CII), ubiquinol-cytochrome c oxidoreductase (cytochrome b-c1 complex, complex III, CIII) and cytochrome c oxidase (complex IV, CIV), that cooperate to transfer electrons derived from NADH and succinate to molecular oxygen, creating an electrochemical gradient over the inner membrane that drives transmembrane transport and the ATP synthase. Cytochrome c oxidase is the component of the respiratory chain that catalyzes the reduction of oxygen to water. Electrons originating from reduced cytochrome c in the intermembrane space (IMS) are transferred via the dinuclear copper A center (CU(A)) of subunit 2 and heme A of subunit 1 to the active site in subunit 1, a binuclear center (BNC) formed by heme A3 and copper B (CU(B)). The BNC reduces molecular oxygen to 2 water molecules using 4 electrons from cytochrome c in the IMS and 4 protons from the mitochondrial matrix. The protein is Cytochrome c oxidase subunit 2 (COII) of Apis florea (Dwarf honeybee).